We begin with the raw amino-acid sequence, 234 residues long: Large ribosomal subunit protein uL1 (234 aa).

The protein belongs to the universal ribosomal protein uL1 family. In terms of assembly, part of the 50S ribosomal subunit.

In terms of biological role, binds directly to 23S rRNA. The L1 stalk is quite mobile in the ribosome, and is involved in E site tRNA release. Its function is as follows. Protein L1 is also a translational repressor protein, it controls the translation of the L11 operon by binding to its mRNA. This Salmonella arizonae (strain ATCC BAA-731 / CDC346-86 / RSK2980) protein is Large ribosomal subunit protein uL1.